Reading from the N-terminus, the 296-residue chain is 4-diphosphocytidyl-2-C-methyl-D-erythritol kinase (296 aa).

The active site involves Lys-11. 96–106 (PVSSGLAGGSA) is an ATP binding site. Asp-136 is an active-site residue.

This sequence belongs to the GHMP kinase family. IspE subfamily.

It catalyses the reaction 4-CDP-2-C-methyl-D-erythritol + ATP = 4-CDP-2-C-methyl-D-erythritol 2-phosphate + ADP + H(+). It participates in isoprenoid biosynthesis; isopentenyl diphosphate biosynthesis via DXP pathway; isopentenyl diphosphate from 1-deoxy-D-xylulose 5-phosphate: step 3/6. Functionally, catalyzes the phosphorylation of the position 2 hydroxy group of 4-diphosphocytidyl-2C-methyl-D-erythritol. In Anaplasma phagocytophilum (strain HZ), this protein is 4-diphosphocytidyl-2-C-methyl-D-erythritol kinase.